The following is a 103-amino-acid chain: Small ribosomal subunit protein uS10 (103 aa).

It belongs to the universal ribosomal protein uS10 family. As to quaternary structure, part of the 30S ribosomal subunit.

Functionally, involved in the binding of tRNA to the ribosomes. The sequence is that of Small ribosomal subunit protein uS10 from Bordetella avium (strain 197N).